Here is a 443-residue protein sequence, read N- to C-terminus: Autophagy-related protein 13 homolog (443 aa).

Disordered regions lie at residues 232-283 and 308-333; these read AKKR…EEDH and ANGT…KEPT. Positions 240 to 253 are enriched in polar residues; the sequence is SVESATSAGSSTSR. The span at 268–283 shows a compositional bias: basic and acidic residues; that stretch reads EDSRHSDVQNSYEEDH. The segment covering 308 to 325 has biased composition (polar residues); sequence ANGTKKNSSSTCLNSPKS.

It belongs to the ATG13 family. Metazoan subfamily. As to quaternary structure, interacts with unc-51 (via C-terminus). Interacts with lgg-1; the interaction is direct.

The protein resides in the cytoplasm. It is found in the cytosol. Its subcellular location is the preautophagosomal structure. The protein localises to the perikaryon. It localises to the cell projection. The protein resides in the axon. Functionally, component of the unc-51/atg-13 complex required for autophagosome formation. Required for the degradation of germ cell specific P-granule components such as sepa-1 by autophagy in somatic cells. This ensures exclusive localization of the P-granules in germ cells. May function downstream of the let-363 (Tor) signaling pathway to mediate sepa-1 degradation. Plays a role in survival during limited food availability. The sequence is that of Autophagy-related protein 13 homolog from Caenorhabditis elegans.